We begin with the raw amino-acid sequence, 583 residues long: Protein disulfide-isomerase-like protein of the testis (583 aa).

The first 17 residues, Met-1–Ala-17, serve as a signal peptide directing secretion. Asn-58, Asn-128, Asn-160, and Asn-340 each carry an N-linked (GlcNAc...) asparagine glycan. Positions Leu-388–Asp-451 constitute a Thioredoxin domain. Basic and acidic residues-rich tracts occupy residues Glu-522–Pro-531 and Asn-540–Glu-559. The segment at Glu-522–Leu-583 is disordered. N-linked (GlcNAc...) asparagine glycosylation is present at Asn-540. Residues Gln-573–Leu-583 are compositionally biased toward basic residues. The short motif at Lys-580–Leu-583 is the Prevents secretion from ER element.

It belongs to the protein disulfide isomerase family. Homodimer. The homodimer is not disulfide-linked. Interacts with ERO1A and CLGN. N-glycosylated.

It is found in the endoplasmic reticulum. In terms of biological role, probable redox-inactive chaperone involved in spermatogenesis. The polypeptide is Protein disulfide-isomerase-like protein of the testis (PDILT) (Macaca fascicularis (Crab-eating macaque)).